The primary structure comprises 465 residues: Ribulose bisphosphate carboxylase large chain (465 aa).

The residue at position 4 (lysine 4) is an N6,N6,N6-trimethyllysine. Substrate contacts are provided by asparagine 113 and threonine 163. Lysine 165 functions as the Proton acceptor in the catalytic mechanism. Lysine 167 contributes to the substrate binding site. Mg(2+) contacts are provided by lysine 191, aspartate 193, and glutamate 194. Position 191 is an N6-carboxylysine (lysine 191). Catalysis depends on histidine 284, which acts as the Proton acceptor. Positions 285, 317, and 369 each coordinate substrate.

Belongs to the RuBisCO large chain family. Type I subfamily. In terms of assembly, heterohexadecamer of 8 large chains and 8 small chains; disulfide-linked. The disulfide link is formed within the large subunit homodimers. The cofactor is Mg(2+). The disulfide bond which can form in the large chain dimeric partners within the hexadecamer appears to be associated with oxidative stress and protein turnover.

The protein resides in the plastid. It is found in the chloroplast. It catalyses the reaction 2 (2R)-3-phosphoglycerate + 2 H(+) = D-ribulose 1,5-bisphosphate + CO2 + H2O. The enzyme catalyses D-ribulose 1,5-bisphosphate + O2 = 2-phosphoglycolate + (2R)-3-phosphoglycerate + 2 H(+). Functionally, ruBisCO catalyzes two reactions: the carboxylation of D-ribulose 1,5-bisphosphate, the primary event in carbon dioxide fixation, as well as the oxidative fragmentation of the pentose substrate in the photorespiration process. Both reactions occur simultaneously and in competition at the same active site. The protein is Ribulose bisphosphate carboxylase large chain of Ephedra tweediana (Vining horsetail).